Reading from the N-terminus, the 957-residue chain is Kinesin heavy chain isoform 5C (957 aa).

One can recognise a Kinesin motor domain in the interval 8 to 327; sequence SIKVMCRFRP…LMFGQRAKTI (320 aa). 8 residues coordinate ATP: glutamine 87, serine 89, serine 90, glycine 91, lysine 92, threonine 93, histidine 94, and lysine 99. A microtubule-binding region spans residues 174–315; it reads VSSPEEVMDV…PSVFNEAETK (142 aa). Positions 406–923 form a coiled coil; that stretch reads VAGISTEEKE…ARRAHSAQIA (518 aa). Residues 859–956 form a globular region; sequence RCELPKLEKR…GSSSNSTHYQ (98 aa). The interval 911-957 is disordered; it reads KNMARRAHSAQIAKPIRPGHYPASSPTAVHAIRGGGGSSSNSTHYQK.

Belongs to the TRAFAC class myosin-kinesin ATPase superfamily. Kinesin family. Kinesin subfamily. Oligomer composed of two heavy chains and two light chains. Interacts with GRIP1 and KLC3. Interacts with TRAK1. Interacts with ZFYVE27. As to expression, highest expression in brain, prostate and testis, and moderate expression in kidney, small intestine and ovary.

It localises to the cytoplasm. The protein localises to the cytoskeleton. Its subcellular location is the cell projection. The protein resides in the dendrite. It catalyses the reaction ATP + H2O = ADP + phosphate + H(+). In terms of biological role, microtubule-associated force-producing protein that may play a role in organelle transport. Has ATPase activity. Involved in synaptic transmission. Mediates dendritic trafficking of mRNAs. Required for anterograde axonal transportation of MAPK8IP3/JIP3 which is essential for MAPK8IP3/JIP3 function in axon elongation. The polypeptide is Kinesin heavy chain isoform 5C (KIF5C) (Homo sapiens (Human)).